The sequence spans 156 residues: ATP synthase subunit b (156 aa).

Residues 7–27 traverse the membrane as a helical segment; sequence LIGQLIAFALFVAFCMKFVWP.

This sequence belongs to the ATPase B chain family. As to quaternary structure, F-type ATPases have 2 components, F(1) - the catalytic core - and F(0) - the membrane proton channel. F(1) has five subunits: alpha(3), beta(3), gamma(1), delta(1), epsilon(1). F(0) has three main subunits: a(1), b(2) and c(10-14). The alpha and beta chains form an alternating ring which encloses part of the gamma chain. F(1) is attached to F(0) by a central stalk formed by the gamma and epsilon chains, while a peripheral stalk is formed by the delta and b chains.

It localises to the cell inner membrane. Functionally, f(1)F(0) ATP synthase produces ATP from ADP in the presence of a proton or sodium gradient. F-type ATPases consist of two structural domains, F(1) containing the extramembraneous catalytic core and F(0) containing the membrane proton channel, linked together by a central stalk and a peripheral stalk. During catalysis, ATP synthesis in the catalytic domain of F(1) is coupled via a rotary mechanism of the central stalk subunits to proton translocation. Component of the F(0) channel, it forms part of the peripheral stalk, linking F(1) to F(0). This Actinobacillus pleuropneumoniae serotype 5b (strain L20) protein is ATP synthase subunit b.